A 546-amino-acid polypeptide reads, in one-letter code: DNA replication factor Cdt1 (546 aa).

A compositionally biased stretch (basic and acidic residues) spans 1–11 (MEQRRVTDFFA). Residues 1 to 23 (MEQRRVTDFFARRRPGPPRIAPP) carry the PIP-box K+4 motif motif. Disordered regions lie at residues 1-118 (MEQR…QDQD) and 143-165 (SAQD…PCGE). Low complexity predominate over residues 28-45 (RTPSPARPALRAPASATS). Thr29 carries the post-translational modification Phosphothreonine; by MAPK8. The residue at position 31 (Ser31) is a Phosphoserine. The Cyclin-binding motif motif lies at 68–70 (RRL). At Ser93 the chain carries Phosphoserine; by MAPK8. Positions 150–190 (SCTPEAEGRPEEPCGEKAPAYQRFHALAQPGLPGLVLPYKY) are interaction with GMNN. Residues 155 to 164 (AEGRPEEPCG) show a composition bias toward basic and acidic residues. A Phosphoserine; by MAPK8 modification is found at Ser318. Residues Ser380 and Ser394 each carry the phosphoserine modification. Positions 383–415 (ALRSAAPSSPGSPRPALPATPPATPPAASPSAL) are disordered. Residues 392–410 (PGSPRPALPATPPATPPAA) are compositionally biased toward pro residues. Residues 451-546 (LERLPELARV…AHQTRAEEGL (96 aa)) form an interaction with LRWD1 region.

This sequence belongs to the Cdt1 family. In terms of assembly, interacts with GMNN; the interaction inhibits binding of the MCM complex to origins of replication. Interacts with MCM6. Interacts with CDC6; are mutually dependent on one another for loading MCM complexes onto chromatin. Interacts with PCNA. Interacts with LRWD1 during G1 phase and during mitosis. Interacts with NDC80 subunit of the NDC80 complex; leading to kinetochore localization. Interacts with GRWD1; origin binding of GRWD1 is dependent on CDT1. Interacts with KAT7. Interacts with ubiquitin-binding protein FAF1; the interaction is likely to promote CDT1 degradation. Two independent E3 ubiquitin ligase complexes, SCF(SKP2) and the DCX(DTL) complex, mediated CDT1 degradation in S phase. Ubiquitinated by the DCX(DTL) complex, in response to DNA damage, leading to its degradation. Ubiquitination by the DCX(DTL) complex is necessary to ensure proper cell cycle regulation and is PCNA-dependent: interacts with PCNA via its PIP-box, while the presence of the containing the 'K+4' motif in the PIP box, recruit the DCX(DTL) complex, leading to its degradation. Phosphorylation at Thr-29 by CDK2 targets CDT1 for ubiquitination by SCF(SKP2) E3 ubiquitin ligase and subsequent degradation. The interaction with GMNN protects it against ubiquitination. Deubiquitinated by USP37. Ubiquitinated and degraded by the SCF(FBXO31) complex during the G2 phase to prevent re-replication. In terms of processing, phosphorylation by cyclin A-dependent kinases at Thr-29 targets CDT1 for ubiquitynation by SCF(SKP2) E3 ubiquitin ligase and subsequent degradation. Phosphorylated at Thr-29 by MAPK8/JNK1, which blocks replication licensing in response to stress. Binding to GMNN is not affected by phosphorylation.

It localises to the nucleus. Its subcellular location is the chromosome. The protein localises to the centromere. It is found in the kinetochore. Functionally, required for both DNA replication and mitosis. DNA replication licensing factor, required for pre-replication complex assembly. Cooperates with CDC6 and the origin recognition complex (ORC) during G1 phase of the cell cycle to promote the loading of the mini-chromosome maintenance (MCM) complex onto DNA to generate pre-replication complexes (pre-RC). Required also for mitosis by promoting stable kinetochore-microtubule attachments. Potential oncogene. The chain is DNA replication factor Cdt1 from Homo sapiens (Human).